The primary structure comprises 600 residues: Pentatricopeptide repeat-containing protein At3g29230 (600 aa).

13 PPR repeats span residues 50–80, 81–115, 116–150, 151–183, 184–218, 219–245, 246–276, 279–313, 314–348, 349–379, 380–414, 415–445, and 451–481; these read DLHIAPKLISALSLCRQTNLAVRVFNQVQEP, NVHLCNSLIRAHAQNSQPYQAFFVFSEMQRFGLFA, DNFTYPFLLKACSGQSWLPVVKMMHNHIEKLGLSS, DIYVPNALIDCYSRCGGLGVRDAMKLFEKMSER, DTVSWNSMLGGLVKAGELRDARRLFDEMPQRDLIS, WNTMLDGYARCREMSKAFELFEKMPER, NTVSWSTMVMGYSKAGDMEMARVMFDKMPLP, NVVTWTIIIAGYAEKGLLKEADRLVDQMVASGLKF, DAAAVISILAACTESGLLSLGMRIHSILKRSNLGS, NAYVLNALLDMYAKCGNLKKAFDVFNDIPKK, DLVSWNTMLHGLGVHGHGKEAIELFSRMRREGIRP, DKVTFIAVLCSCNHAGLIDEGIDYFYSMEKV, and QVEHYGCLVDLLGRVGRLKEAIKVVQTMPME. The tract at residues 486 to 561 is type E motif; sequence IWGALLGACR…PSGASSVELE (76 aa). The segment at 562–592 is type E(+) motif; that stretch reads DGIHEFTVFDKSHPKSDQIYQMLGSLIEPPD.

This sequence belongs to the PPR family. PCMP-E subfamily.

This chain is Pentatricopeptide repeat-containing protein At3g29230 (PCMP-E27), found in Arabidopsis thaliana (Mouse-ear cress).